An 835-amino-acid chain; its full sequence is Protein translocase subunit SecA (835 aa).

Residues Gln85, 103-107 (GEGKT), and Asp492 each bind ATP. Zn(2+) contacts are provided by Cys819, Cys821, Cys830, and Cys831.

Belongs to the SecA family. Monomer and homodimer. Part of the essential Sec protein translocation apparatus which comprises SecA, SecYEG and auxiliary proteins SecDF. Other proteins may also be involved. Zn(2+) is required as a cofactor.

Its subcellular location is the cell membrane. It localises to the cytoplasm. It carries out the reaction ATP + H2O + cellular proteinSide 1 = ADP + phosphate + cellular proteinSide 2.. Functionally, part of the Sec protein translocase complex. Interacts with the SecYEG preprotein conducting channel. Has a central role in coupling the hydrolysis of ATP to the transfer of proteins into and across the cell membrane, serving as an ATP-driven molecular motor driving the stepwise translocation of polypeptide chains across the membrane. The chain is Protein translocase subunit SecA from Clostridium botulinum (strain Loch Maree / Type A3).